An 864-amino-acid chain; its full sequence is MTSFEIRQMWIKFFASKNHHIEKSFSLIPRNEDNLLWVNAGITPLKKYFDGTQTPSFRRITNVQKCIRTKDIKNVGKTSRHHTFFEMLGNFSIGNYFKKEAIHYAFELLTSPKWFGFPLEKLYITYFFQDQDTYQYWLDLGVNKNHLIHLKDNFWQIGPGPSGPCTEIFFDRGKTFDPRNKELIIEDLENDRFIEIWNIVFSQYNCDPKLPIEKYQELPSKNIDTGAGLERLACILQNTKTNFETDLFFPLIKALEKMTQITYTGQESFKIIADHLKTLVFAINDGAVLTNEKRGYVLKKLLRRAANEGKKLGLEKPFLYKLVPPTVAMMKDFYKELCTNQEMIAKVLLQQENIFEKTLKTAEKTFLQHLTQNTLSGKNFFKLYDTYGIPENLILDYAKKKNITTDYQKFQELLHEQQNLSKKNQTSQTNMNKQEEAFLHFLTPSEFIGYTNFACKTKVIKVFDEGIVLEKTPFYANMGGQIEDEGWIDNNKVTKITKLPNGQILHEFKGNFCEGQEVYACIDKTKRKQISYHHTATHLLEVVLQKQLGNHIKKQGSSVGFSSLRYDFNHFEKITPQTLLQIEKEVNQLIQKRVPVKIEQLSIQDAQKKYATLLEQNQKAKYKDKVRIVNIDTFSVDLCGGTHATNTKDLEHFTILSYESISSGIYRIEAVCNKNCQESLNAKLAPYQNELHQLTQKAKSLQTQNLDFEIKKFPPITKSYQDIINYQKHIKTQQQALVLFEKKVLEHHQKKMIQAESNFLPPQINKKMMLTIKEEKPLEVIKFFMNHIFYKYHLEVLFLSYVQPEKIVFLCQSKTLHAGNLIKEGVSLACGSGGGNASLAQGGTKKTQNLEKMLNFVKNKLKIN.

Residues H534, H538, C639, and H643 each coordinate Zn(2+).

It belongs to the class-II aminoacyl-tRNA synthetase family. It depends on Zn(2+) as a cofactor.

It localises to the cytoplasm. It catalyses the reaction tRNA(Ala) + L-alanine + ATP = L-alanyl-tRNA(Ala) + AMP + diphosphate. Functionally, catalyzes the attachment of alanine to tRNA(Ala) in a two-step reaction: alanine is first activated by ATP to form Ala-AMP and then transferred to the acceptor end of tRNA(Ala). Also edits incorrectly charged Ser-tRNA(Ala) and Gly-tRNA(Ala) via its editing domain. The chain is Alanine--tRNA ligase from Aster yellows witches'-broom phytoplasma (strain AYWB).